The primary structure comprises 572 residues: Linalool synthase TPS2, chloroplastic (572 aa).

Residues 1-27 (EVEEPKTKISASTAEASSSRISSAKMT) constitute a chloroplast transit peptide. The segment at 1–45 (EVEEPKTKISASTAEASSSRISSAKMTADGTIKLGDQSPLKQSEK) is disordered. Positions 8 to 28 (KISASTAEASSSRISSAKMTA) are enriched in low complexity. (2E)-geranyl diphosphate-binding residues include Arg-284, Asp-321, Asp-325, Arg-462, and Asn-465. Mg(2+) is bound by residues Asp-321 and Asp-325. Positions 321-325 (DDVYD) match the DDXXD motif motif. Mg(2+) is bound by residues Asn-465, Thr-469, and Ser-473.

It belongs to the terpene synthase family. Tpsb subfamily. As to quaternary structure, monomer. Mg(2+) serves as cofactor. Mn(2+) is required as a cofactor. As to expression, expressed in flowers and fruits.

The protein resides in the plastid. It is found in the chloroplast. It catalyses the reaction (2E)-geranyl diphosphate = beta-myrcene + diphosphate. The enzyme catalyses (2E)-geranyl diphosphate + H2O = linalool + diphosphate. It carries out the reaction (2E)-geranyl diphosphate = (Z)-beta-ocimene + diphosphate. The catalysed reaction is (2E)-geranyl diphosphate = (E)-beta-ocimene + diphosphate. It functions in the pathway secondary metabolite biosynthesis; terpenoid biosynthesis. Its function is as follows. Monoterpene synthase (mono-TPS) involved in the biosynthesis of monoterpenes natural products, constituent of coffee beverage aroma. Catalyzes the conversion of (2E)-geranyl diphosphate (GPP) into linalool and beta-myrcene, and, as minor products, cis-ocimene and trans-ocimene. Not able to use geranylgeranyl pyrophosphate (GGPP) and farnesyl pyrophosphate (FPP) as substrates. This Coffea arabica (Arabian coffee) protein is Linalool synthase TPS2, chloroplastic.